The chain runs to 122 residues: Large ribosomal subunit protein eL18 (122 aa).

It belongs to the eukaryotic ribosomal protein eL18 family.

The sequence is that of Large ribosomal subunit protein eL18 from Picrophilus torridus (strain ATCC 700027 / DSM 9790 / JCM 10055 / NBRC 100828 / KAW 2/3).